Here is a 326-residue protein sequence, read N- to C-terminus: Mitochondrial glycine transporter (326 aa).

Solcar repeat units follow at residues 22-106, 135-216, and 228-312; these read SKTT…LRTS, SANL…LKRY, and SSSS…LILR. A run of 6 helical transmembrane segments spans residues 28 to 53, 81 to 107, 138 to 163, 191 to 214, 232 to 258, and 287 to 305; these read FGAG…TRVQ, GTLP…RTSL, LATG…VRYE, GFGA…EQLK, INFV…KTRL, and GLGL…AWTV.

Belongs to the mitochondrial carrier (TC 2.A.29) family. SLC25A38 subfamily.

The protein resides in the mitochondrion inner membrane. The catalysed reaction is glycine(in) = glycine(out). Mitochondrial glycine transporter that imports glycine into the mitochondrial matrix. Plays an important role in providing glycine for the first enzymatic step in heme biosynthesis, the condensation of glycine with succinyl-CoA to produce 5-aminolevulinate (ALA) in the mitochondrial matrix. The polypeptide is Mitochondrial glycine transporter (Emericella nidulans (strain FGSC A4 / ATCC 38163 / CBS 112.46 / NRRL 194 / M139) (Aspergillus nidulans)).